Here is a 582-residue protein sequence, read N- to C-terminus: V-type ATP synthase alpha chain (582 aa).

231–238 (GPFGSGKT) is a binding site for ATP.

This sequence belongs to the ATPase alpha/beta chains family.

The catalysed reaction is ATP + H2O + 4 H(+)(in) = ADP + phosphate + 5 H(+)(out). In terms of biological role, produces ATP from ADP in the presence of a proton gradient across the membrane. The V-type alpha chain is a catalytic subunit. This is V-type ATP synthase alpha chain from Deinococcus geothermalis (strain DSM 11300 / CIP 105573 / AG-3a).